An 83-amino-acid polypeptide reads, in one-letter code: NAD(P)H-quinone oxidoreductase subunit L (83 aa).

The next 2 helical transmembrane spans lie at 18–38 (IGGY…LLFF) and 53–73 (FSVY…APFL).

The protein belongs to the complex I NdhL subunit family. In terms of assembly, NDH-1 can be composed of about 15 different subunits; different subcomplexes with different compositions have been identified which probably have different functions.

It localises to the cellular thylakoid membrane. It catalyses the reaction a plastoquinone + NADH + (n+1) H(+)(in) = a plastoquinol + NAD(+) + n H(+)(out). The enzyme catalyses a plastoquinone + NADPH + (n+1) H(+)(in) = a plastoquinol + NADP(+) + n H(+)(out). In terms of biological role, NDH-1 shuttles electrons from an unknown electron donor, via FMN and iron-sulfur (Fe-S) centers, to quinones in the respiratory and/or the photosynthetic chain. The immediate electron acceptor for the enzyme in this species is believed to be plastoquinone. Couples the redox reaction to proton translocation, and thus conserves the redox energy in a proton gradient. Cyanobacterial NDH-1 also plays a role in inorganic carbon-concentration. The protein is NAD(P)H-quinone oxidoreductase subunit L of Synechococcus sp. (strain CC9311).